A 323-amino-acid chain; its full sequence is Sphingolipid delta(4)-desaturase/C4-monooxygenase DES2 (323 aa).

Gly2 carries N-myristoyl glycine lipidation. 2 helical membrane passes run Pro41 to Val61 and Trp68 to Ile88. Residues His89–His93 carry the Histidine box-1 motif. Residues Thr95–Thr99 are required for C4-hydroxylase activity. The Histidine box-2 signature appears at His128–His132. A helical membrane pass occupies residues Val210 to Ala231. The Histidine box-3 motif lies at His259 to His263.

The protein belongs to the fatty acid desaturase type 1 family. DEGS subfamily. As to expression, highly expressed in intestinal crypt cells and adjacent epithelial cells (at protein level).

Its subcellular location is the endoplasmic reticulum membrane. It catalyses the reaction a dihydroceramide + 2 Fe(II)-[cytochrome b5] + O2 + 2 H(+) = a phytoceramide + 2 Fe(III)-[cytochrome b5] + H2O. The enzyme catalyses an N-acylsphinganine + 2 Fe(II)-[cytochrome b5] + O2 + 2 H(+) = an N-acylsphing-4-enine + 2 Fe(III)-[cytochrome b5] + 2 H2O. The catalysed reaction is an N-acylsphinganine + 2 Fe(II)-[cytochrome b5] + O2 + 2 H(+) = an N-acyl-(4R)-4-hydroxysphinganine + 2 Fe(III)-[cytochrome b5] + H2O. It carries out the reaction N-octanoylsphinganine + 2 Fe(II)-[cytochrome b5] + O2 + 2 H(+) = N-octanoyl-4-hydroxysphinganine + 2 Fe(III)-[cytochrome b5] + H2O. It participates in membrane lipid metabolism; sphingolipid biosynthesis. Bifunctional enzyme which acts both as a sphingolipid delta(4)-desaturase and a sphingolipid C4-monooxygenase. This chain is Sphingolipid delta(4)-desaturase/C4-monooxygenase DES2, found in Mus musculus (Mouse).